A 677-amino-acid polypeptide reads, in one-letter code: UvrABC system protein B (677 aa).

The region spanning 25-412 (DGVNSGREYQ…SGAIIEQVIR (388 aa)) is the Helicase ATP-binding domain. 38 to 45 (GATGTGKT) is an ATP binding site. Positions 91–114 (YYDYYQPEAYVPVSDTYIAKTSSI) match the Beta-hairpin motif. Positions 429–591 (QVEDLLDEIR…IVPMPAGKKA (163 aa)) constitute a Helicase C-terminal domain. Residues 639-674 (PQLIDELETKMKKSAKDLDFENAAKLRDKIHQLRKK) form the UVR domain.

It belongs to the UvrB family. In terms of assembly, forms a heterotetramer with UvrA during the search for lesions. Interacts with UvrC in an incision complex.

The protein resides in the cytoplasm. The UvrABC repair system catalyzes the recognition and processing of DNA lesions. A damage recognition complex composed of 2 UvrA and 2 UvrB subunits scans DNA for abnormalities. Upon binding of the UvrA(2)B(2) complex to a putative damaged site, the DNA wraps around one UvrB monomer. DNA wrap is dependent on ATP binding by UvrB and probably causes local melting of the DNA helix, facilitating insertion of UvrB beta-hairpin between the DNA strands. Then UvrB probes one DNA strand for the presence of a lesion. If a lesion is found the UvrA subunits dissociate and the UvrB-DNA preincision complex is formed. This complex is subsequently bound by UvrC and the second UvrB is released. If no lesion is found, the DNA wraps around the other UvrB subunit that will check the other stand for damage. This chain is UvrABC system protein B, found in Prochlorococcus marinus (strain SARG / CCMP1375 / SS120).